Here is a 339-residue protein sequence, read N- to C-terminus: MLEVQSSNHGCERQAPTTSPASSAGHAVEVRPGLYLGGAAAVAGPDYLREAGITAVLTVDSEPAFPAGAGFEGLQSLFVPALDKPETDLLSHLDRCVAFIGQARSEGRAVLVHCHAGVSRSVAVVTAFIMKTEQLTFEKAYENLQTIKPEAKMNEGFEWQLKLYEAMGHEVHTSSAVYKQYRLQKVTEKYPELRNLPRELFAVDPTTVSQGLKDDILYKCRKCRRSLFRRSSILDHSEGSGPVAFAHKRTGLSSVLTTGNQAQCTSYFIEPVQWMESALLGVMDGQLLCPKCSAKLGSFNWYGEQCSCGRWITPAFQIHKNRVDEVKTLPALGSQTKKP.

Methionine 1 is modified (N-acetylmethionine). The span at 1-22 shows a compositional bias: polar residues; the sequence is MLEVQSSNHGCERQAPTTSPAS. The tract at residues 1–25 is disordered; it reads MLEVQSSNHGCERQAPTTSPASSAG. Positions 26-170 constitute a Tyrosine-protein phosphatase domain; it reads HAVEVRPGLY…LKLYEAMGHE (145 aa). Cysteine 114 (phosphocysteine intermediate) is an active-site residue. 115–120 contributes to the substrate binding site; that stretch reads HAGVSR. A Phosphoserine modification is found at serine 334.

The protein belongs to the protein-tyrosine phosphatase family. Non-receptor class dual specificity subfamily. In terms of assembly, monomer. Zn(2+) is required as a cofactor.

The protein localises to the nucleus. Its subcellular location is the cytoplasm. It localises to the cytosol. The catalysed reaction is O-phospho-L-tyrosyl-[protein] + H2O = L-tyrosyl-[protein] + phosphate. The enzyme catalyses O-phospho-L-seryl-[protein] + H2O = L-seryl-[protein] + phosphate. It catalyses the reaction O-phospho-L-threonyl-[protein] + H2O = L-threonyl-[protein] + phosphate. Dual specificity phosphatase; can dephosphorylate both phosphotyrosine and phosphoserine or phosphothreonine residues. Can dephosphorylate glucokinase (in vitro). Has phosphatase activity with the synthetic substrate 6,8-difluoro-4-methylumbelliferyl phosphate and other in vitro substrates. This chain is Dual specificity protein phosphatase 12 (Dusp12), found in Rattus norvegicus (Rat).